A 141-amino-acid chain; its full sequence is uncharacterized protein (141 aa).

A run of 2 helical transmembrane segments spans residues 41 to 61 (LIML…NYLF) and 95 to 115 (IIFL…SGFF).

The protein resides in the cell membrane. This is an uncharacterized protein from Rickettsia prowazekii (strain Madrid E).